Reading from the N-terminus, the 1268-residue chain is MEAVKTFNSELYSLNDYKPPISKAKMTQITKAAIKAIKFYKHVVQSVEKFIQKCKPEYKVPGLYVIDSIVRQSRHQVGQEKDVCAPRFSNNIISTFQNLYRCPGDDKSKIVRVLNLWQKNNVFKSEIIQPLLDMAAGIPPPVVTPVLASTTVAMSNTPGTPVTPVTPANVVQGLPDPWVSQITNTDTLAAVAQILQSPQGQQLQQLIQTLQIQQQKPQPSILQALDAGLVVQLQALTAQLTAAAAAANTLTPLDQGVSFNKKLMDRFDFGEDSEHSEESKKEIPTPQLSHVSESVNNSIFHQIAEQLQQQNLEQLRQQLLEQQQPQKVTPQDSQEGAFGSEHSASPSQGSSQQHFLEPEANLDDSIDIQQQDMDIDEGQDVVEEEIFEPEAKKVAVRSRSRTHSRSRSRSPRKRRSRSRSGSRKRKHRKRSRSRSRERKRKSSRSYSSERRAREREKERQKKGLPPVRSKTLSVCSTTLWVGQVDKKATQQDLTNLFEEFGQIESINMIPPRGCAYVCMVHRQDSFRALQKLSSGSYKIGSKVIKIAWALNKGVKTEYKQFWDVDLGVTYIPWEKVKVDDLDGFAEGGMIDQETVNAEWETVKTSEPVKETVQTTQSPAAVEKETVVTTQSEVFPPPVTMLQIPVAPTVPAVSLVPPAFPVSMPVPPPGFSPIPPPPFLRASFNPSQPPPGFMPPPVPPPVVPPPAIPPVVPTSLVQPPLSMTPETVKDVGFGSLVLPGGSVAGNLAPSTLPAGNVFNPPSKAEPEEKVPHLTEHQIPSGENTRPVIPSDIPSSAPMLAQPPGASNTSGILCVQRPNVSSNSEILGVRPANVSNSAAIMGAQPPNMLNNSGILGIQPPNVSSGSGLLGVLPPNLPNNSGLVGLQPPNVTNPAGLLGTQPPIGPQNLPPLTIPAQRMPALPMLDIRPGLIAQAPGPRFPLLQPGIPPQRGIPPPSVLDAALHPPPRGPFPPGDLFSQPERPFLAPGRPNIDSVPNPDKRIPLGNDNIQQEGDRDYRFPPIETREGINRPPPVDVRDVVGRPIDPREGPGRPPLDGRDHFGRPPVDMRETLVRPGLDHLGRRDHFGFPPEKPWGPRDFDEREHRVLPVFGGPKGLHEERGRFRAGNYRFDPRSGPWNRGFGQEVHRDFDDRRRPWERQRDRDDRDFDFCREINGNRLGRDRIQNTWVPPPHARVFDYFEGATSQRKGENVPQVNGGNTERHAPPPPLPVQKDPELYEKLASSGDADKEESGTAAGVESEAVVESTETEGT.

One can recognise a CID domain in the interval 1–139; sequence MEAVKTFNSE…PLLDMAAGIP (139 aa). Thr-6 carries the phosphothreonine modification. Lys-18 participates in a covalent cross-link: Glycyl lysine isopeptide (Lys-Gly) (interchain with G-Cter in SUMO1). Ser-273 carries the post-translational modification Phosphoserine. Disordered regions lie at residues 322–355 and 385–469; these read QQQP…QQHF and EIFE…PVRS. Positions 342-354 are enriched in polar residues; the sequence is HSASPSQGSSQQH. Positions 394–443 are enriched in basic residues; the sequence is VAVRSRSRTHSRSRSRSPRKRRSRSRSGSRKRKHRKRSRSRSRERKRKSS. The span at 447-461 shows a compositional bias: basic and acidic residues; sequence SSERRAREREKERQK. Residues 477–551 form the RRM domain; that stretch reads TTLWVGQVDK…KVIKIAWALN (75 aa). Thr-615 carries the post-translational modification Phosphothreonine. At Ser-617 the chain carries Phosphoserine. The segment at 753-808 is disordered; sequence AGNVFNPPSKAEPEEKVPHLTEHQIPSGENTRPVIPSDIPSSAPMLAQPPGASNTS. Positions 763 to 774 are enriched in basic and acidic residues; sequence AEPEEKVPHLTE. Arg-915, Arg-925, and Arg-936 each carry asymmetric dimethylarginine. The interval 947 to 1063 is disordered; the sequence is QRGIPPPSVL…GRDHFGRPPV (117 aa). Residues 961-970 show a composition bias toward pro residues; sequence HPPPRGPFPP. 2 stretches are compositionally biased toward basic and acidic residues: residues 1009–1025 and 1032–1063; these read EGDR…REGI and DVRD…RPPV. An Asymmetric dimethylarginine modification is found at Arg-1071. Residues 1199 to 1268 are disordered; the sequence is ATSQRKGENV…VVESTETEGT (70 aa). The span at 1249-1262 shows a compositional bias: low complexity; sequence GTAAGVESEAVVES.

Interacts with POLR2A; via C-terminal heptapeptide repeat domain (CTD) phosphorylated at 'Ser-2' and 'Ser-5'. Identified in a complex with CDC5L and other spliceosomal proteins.

Its subcellular location is the nucleus. It is found in the nucleus matrix. Functionally, anti-terminator protein required to prevent early mRNA termination during transcription. Together with SCAF4, acts by suppressing the use of early, alternative poly(A) sites, thereby preventing the accumulation of non-functional truncated proteins. Mechanistically, associates with the phosphorylated C-terminal heptapeptide repeat domain (CTD) of the largest RNA polymerase II subunit (POLR2A), and subsequently binds nascent RNA upstream of early polyadenylation sites to prevent premature mRNA transcript cleavage and polyadenylation. Independently of SCAF4, also acts as a positive regulator of transcript elongation. In Rattus norvegicus (Rat), this protein is SR-related and CTD-associated factor 8.